A 623-amino-acid polypeptide reads, in one-letter code: DNA mismatch repair protein MutL (623 aa).

Residues 353–368 (AQQSAPRPANSYSPAS) are compositionally biased toward polar residues. Positions 353 to 389 (AQQSAPRPANSYSPASWRTAPPAPRSEWSPQTAQTAH) are disordered.

The protein belongs to the DNA mismatch repair MutL/HexB family.

In terms of biological role, this protein is involved in the repair of mismatches in DNA. It is required for dam-dependent methyl-directed DNA mismatch repair. May act as a 'molecular matchmaker', a protein that promotes the formation of a stable complex between two or more DNA-binding proteins in an ATP-dependent manner without itself being part of a final effector complex. The sequence is that of DNA mismatch repair protein MutL from Brucella melitensis biotype 2 (strain ATCC 23457).